The sequence spans 87 residues: Defensin-like protein 175 (87 aa).

A signal peptide spans 1–23 (MAKATSSLVVPIIFLVIFALVEQ). Intrachain disulfides connect C27–C66, C36–C55, C39–C60, and C43–C62.

It belongs to the DEFL family.

Its subcellular location is the secreted. The sequence is that of Defensin-like protein 175 from Arabidopsis thaliana (Mouse-ear cress).